The primary structure comprises 118 residues: UPF0295 protein BcerKBAB4_0454 (118 aa).

Helical transmembrane passes span 12–32 and 43–63; these read IRTFALSLVFIGLFIAYLGVF and FMMVGFLAVIASTVVYFWIGM.

This sequence belongs to the UPF0295 family.

The protein resides in the cell membrane. The sequence is that of UPF0295 protein BcerKBAB4_0454 from Bacillus mycoides (strain KBAB4) (Bacillus weihenstephanensis).